Reading from the N-terminus, the 221-residue chain is Probable nicotinate-nucleotide adenylyltransferase (221 aa).

Belongs to the NadD family.

The catalysed reaction is nicotinate beta-D-ribonucleotide + ATP + H(+) = deamido-NAD(+) + diphosphate. Its pathway is cofactor biosynthesis; NAD(+) biosynthesis; deamido-NAD(+) from nicotinate D-ribonucleotide: step 1/1. Its function is as follows. Catalyzes the reversible adenylation of nicotinate mononucleotide (NaMN) to nicotinic acid adenine dinucleotide (NaAD). This chain is Probable nicotinate-nucleotide adenylyltransferase, found in Marinomonas sp. (strain MWYL1).